A 169-amino-acid chain; its full sequence is Chorismate pyruvate-lyase (169 aa).

4 residues coordinate substrate: Met-37, Arg-79, Leu-117, and Glu-158.

Belongs to the UbiC family. As to quaternary structure, monomer.

The protein resides in the cytoplasm. It catalyses the reaction chorismate = 4-hydroxybenzoate + pyruvate. It functions in the pathway cofactor biosynthesis; ubiquinone biosynthesis. Its function is as follows. Removes the pyruvyl group from chorismate, with concomitant aromatization of the ring, to provide 4-hydroxybenzoate (4HB) for the ubiquinone pathway. This is Chorismate pyruvate-lyase from Proteus mirabilis (strain HI4320).